Consider the following 317-residue polypeptide: Probable RuBisCO transcriptional regulator (317 aa).

Residues 6–63 form the HTH lysR-type domain; that stretch reads FTLDQLRILKAIAKEGSFKKAANSLYVSQPAISLQIQNLERQLNVALFERGNKKATLT. Positions 23–42 form a DNA-binding region, H-T-H motif; the sequence is FKKAANSLYVSQPAISLQIQ.

This sequence belongs to the LysR transcriptional regulatory family.

The protein resides in the plastid. The protein localises to the chloroplast. Functionally, trans-acting transcriptional regulator of RuBisCO genes (rbcL and rbcS) expression. This chain is Probable RuBisCO transcriptional regulator (rbcR), found in Porphyra purpurea (Red seaweed).